A 1003-amino-acid chain; its full sequence is Rho-associated protein kinase 1 (1003 aa).

The segment at 1–28 (VAPVVPDLSSDIDTSNFDDLEEDKGEEE) is disordered. In terms of domain architecture, AGC-kinase C-terminal spans 1–58 (VAPVVPDLSSDIDTSNFDDLEEDKGEEETFPIPKAFVGNQLPFVGFTYYSNRRYLSSA). A compositionally biased stretch (acidic residues) spans 16-28 (NFDDLEEDKGEEE). Positions 17–376 (FDDLEEDKGE…KKLKEEREAR (360 aa)) are interaction with FHOD1. Residues 71 to 341 (KSLQESLQKT…RLEQEVNEHK (271 aa)) are a coiled coil. The 78-residue stretch at 128 to 205 (STVSQIEKEK…LEEANDLLRT (78 aa)) folds into the REM-1 domain. Lys-296 is modified (N6-acetyllysine). Residues 356-595 (EAKSVAMCEM…TVSRLEEANS (240 aa)) form an SHROOM3 binding region. Residues 598 to 664 (TKDIEILRRE…LAEIMNRKDF (67 aa)) enclose the RhoBD domain. Residues 647–659 (LKTQAVNKLAEIM) are RHOA binding. A coiled-coil region spans residues 660 to 751 (NRKDFKIDRK…KLLDLSDSTS (92 aa)). Phosphoserine is present on residues Ser-754 and Ser-757. Residues 764–1003 (NLPESRIEGW…VVKNTSGKTR (240 aa)) are auto-inhibitory. Residues 767–966 (ESRIEGWLSV…WVTHLVKKIP (200 aa)) enclose the PH domain. The segment at 877–930 (GHEFIPTLYHFPANCDACAKPLWHVFKPPPALECRRCHVKCHRDHLDKKEDLIC) adopts a Phorbol-ester/DAG-type zinc-finger fold. Positions 968–1003 (NPPSGFVRASPRTLSTRSTANQSFRKVVKNTSGKTR) are disordered. Residue Ser-977 is modified to Phosphoserine. Residues 979 to 1003 (RTLSTRSTANQSFRKVVKNTSGKTR) are compositionally biased toward polar residues.

It belongs to the protein kinase superfamily. AGC Ser/Thr protein kinase family. Homodimer. Interacts with RHOA (activated by GTP), RHOB, RHOC, GEM, MYLC2B, RHOE, PPP1R12A, LIMK1, LIMK2, TSG101, CHORDC1, DAPK3, PFN1, PTEN and JIP3. Interacts with ITGB1BP1 (via N-terminus and PTB domain). Interacts with FHOD1 in a Src-dependent manner. Interacts with SHROOM3. Requires Mg(2+) as cofactor. Autophosphorylated on serine and threonine residues. In terms of processing, cleaved by caspase-3 during apoptosis. This leads to constitutive activation of the kinase and membrane blebbing.

Its subcellular location is the cytoplasm. It localises to the cytoskeleton. The protein resides in the microtubule organizing center. It is found in the centrosome. The protein localises to the centriole. Its subcellular location is the golgi apparatus membrane. It localises to the cell projection. The protein resides in the bleb. It is found in the cell membrane. The protein localises to the lamellipodium. Its subcellular location is the ruffle. It catalyses the reaction L-seryl-[protein] + ATP = O-phospho-L-seryl-[protein] + ADP + H(+). It carries out the reaction L-threonyl-[protein] + ATP = O-phospho-L-threonyl-[protein] + ADP + H(+). Activated by RHOA binding. Inhibited by Y-27632. Protein kinase which is a key regulator of actin cytoskeleton and cell polarity. Involved in regulation of smooth muscle contraction, actin cytoskeleton organization, stress fiber and focal adhesion formation, neurite retraction, cell adhesion and motility via phosphorylation of DAPK3, GFAP, LIMK1, LIMK2, MYL9/MLC2, TPPP, PFN1 and PPP1R12A. Phosphorylates FHOD1 and acts synergistically with it to promote SRC-dependent non-apoptotic plasma membrane blebbing. Phosphorylates JIP3 and regulates the recruitment of JNK to JIP3 upon UVB-induced stress. Acts as a suppressor of inflammatory cell migration by regulating PTEN phosphorylation and stability. Acts as a negative regulator of VEGF-induced angiogenic endothelial cell activation. Required for centrosome positioning and centrosome-dependent exit from mitosis. Plays a role in terminal erythroid differentiation. May regulate closure of the eyelids and ventral body wall by inducing the assembly of actomyosin bundles. Promotes keratinocyte terminal differentiation. Involved in osteoblast compaction through the fibronectin fibrillogenesis cell-mediated matrix assembly process, essential for osteoblast mineralization. This chain is Rho-associated protein kinase 1 (ROCK1), found in Pan troglodytes (Chimpanzee).